We begin with the raw amino-acid sequence, 154 residues long: Small ribosomal subunit protein uS13m (154 aa).

The transit peptide at 1–30 (MLGLRRSATTLFDISQSLLRNVTFHGLRVQ) directs the protein to the mitochondrion. A disordered region spans residues 121–154 (RHGLPCRGQRTSTNARTKKGKAVAIAGKKKAPRK). The segment covering 136–154 (RTKKGKAVAIAGKKKAPRK) has biased composition (basic residues).

This sequence belongs to the universal ribosomal protein uS13 family. Part of the small ribosomal subunit.

The protein resides in the mitochondrion. Functionally, located at the top of the head of the small subunit, it contacts several helices of the 18S rRNA. The protein is Small ribosomal subunit protein uS13m (RPS13) of Arabidopsis thaliana (Mouse-ear cress).